Consider the following 394-residue polypeptide: Probable tRNA sulfurtransferase (394 aa).

The THUMP domain occupies aspartate 61–isoleucine 168. ATP contacts are provided by residues leucine 185–leucine 186, tyrosine 210–phenylalanine 211, arginine 267, glycine 289, and glutamine 298.

The protein belongs to the ThiI family.

The protein localises to the cytoplasm. The enzyme catalyses [ThiI sulfur-carrier protein]-S-sulfanyl-L-cysteine + a uridine in tRNA + 2 reduced [2Fe-2S]-[ferredoxin] + ATP + H(+) = [ThiI sulfur-carrier protein]-L-cysteine + a 4-thiouridine in tRNA + 2 oxidized [2Fe-2S]-[ferredoxin] + AMP + diphosphate. The catalysed reaction is [ThiS sulfur-carrier protein]-C-terminal Gly-Gly-AMP + S-sulfanyl-L-cysteinyl-[cysteine desulfurase] + AH2 = [ThiS sulfur-carrier protein]-C-terminal-Gly-aminoethanethioate + L-cysteinyl-[cysteine desulfurase] + A + AMP + 2 H(+). It participates in cofactor biosynthesis; thiamine diphosphate biosynthesis. Catalyzes the ATP-dependent transfer of a sulfur to tRNA to produce 4-thiouridine in position 8 of tRNAs, which functions as a near-UV photosensor. Also catalyzes the transfer of sulfur to the sulfur carrier protein ThiS, forming ThiS-thiocarboxylate. This is a step in the synthesis of thiazole, in the thiamine biosynthesis pathway. The sulfur is donated as persulfide by IscS. The chain is Probable tRNA sulfurtransferase from Agathobacter rectalis (strain ATCC 33656 / DSM 3377 / JCM 17463 / KCTC 5835 / VPI 0990) (Eubacterium rectale).